The chain runs to 315 residues: Ferrochelatase (315 aa).

Fe cation contacts are provided by H193 and E273.

This sequence belongs to the ferrochelatase family.

Its subcellular location is the cytoplasm. The catalysed reaction is heme b + 2 H(+) = protoporphyrin IX + Fe(2+). It participates in porphyrin-containing compound metabolism; protoheme biosynthesis; protoheme from protoporphyrin-IX: step 1/1. Functionally, catalyzes the ferrous insertion into protoporphyrin IX. The chain is Ferrochelatase from Wolbachia pipientis wMel.